The chain runs to 1381 residues: Major capsid protein (1381 aa).

Belongs to the herpesviridae major capsid protein family. In terms of assembly, homomultimer. Makes the hexons and eleven out of twelve pentons. Interacts with triplex proteins 1/TRX1 and 2/TRX2; adjacent capsomers are linked together in groups of three by triplexes, heterotrimeric complexes composed of one molecule of TRX1 and two molecules of TRX2. Interacts with scaffold protein; this interaction allows efficient MCP transport to the host nucleus. Interacts with capsid vertex component 2/CVC2. Interacts with the small capsomere-interacting protein/SCP.

It localises to the virion. The protein localises to the host nucleus. Functionally, self-assembles to form an icosahedral capsid with a T=16 symmetry, about 200 nm in diameter, and consisting of 150 hexons and 12 pentons (total of 162 capsomers). Hexons form the edges and faces of the capsid and are each composed of six MCP molecules. In contrast, one penton is found at each of the 12 vertices. Eleven of the pentons are MCP pentamers, while the last vertex is occupied by the portal complex. The capsid is surrounded by a layer of proteinaceous material designated the tegument which, in turn, is enclosed in an envelope of host cell-derived lipids containing virus-encoded glycoproteins. This chain is Major capsid protein, found in Epstein-Barr virus (strain B95-8) (HHV-4).